We begin with the raw amino-acid sequence, 305 residues long: GTP cyclohydrolase FolE2 (305 aa).

This sequence belongs to the GTP cyclohydrolase IV family.

The catalysed reaction is GTP + H2O = 7,8-dihydroneopterin 3'-triphosphate + formate + H(+). It participates in cofactor biosynthesis; 7,8-dihydroneopterin triphosphate biosynthesis; 7,8-dihydroneopterin triphosphate from GTP: step 1/1. In terms of biological role, converts GTP to 7,8-dihydroneopterin triphosphate. This Xanthomonas axonopodis pv. citri (strain 306) protein is GTP cyclohydrolase FolE2.